Consider the following 25-residue polypeptide: Ocellatin-K1 (25 aa).

Isoleucine amide is present on Ile25.

In terms of tissue distribution, expressed by the skin glands.

It is found in the secreted. Has hemolytic and antibacterial activity. The polypeptide is Ocellatin-K1 (Leptodactylus knudseni (Knudsen's thin-toed frog)).